Here is a 241-residue protein sequence, read N- to C-terminus: Carboxy-S-adenosyl-L-methionine synthase (241 aa).

Residues Y38, 63 to 65, 88 to 89, 116 to 117, N131, and R198 contribute to the S-adenosyl-L-methionine site; these read GCS, DN, and DI.

It belongs to the class I-like SAM-binding methyltransferase superfamily. Cx-SAM synthase family. Homodimer.

It catalyses the reaction prephenate + S-adenosyl-L-methionine = carboxy-S-adenosyl-L-methionine + 3-phenylpyruvate + H2O. In terms of biological role, catalyzes the conversion of S-adenosyl-L-methionine (SAM) to carboxy-S-adenosyl-L-methionine (Cx-SAM). The sequence is that of Carboxy-S-adenosyl-L-methionine synthase from Glaesserella parasuis serovar 5 (strain SH0165) (Haemophilus parasuis).